The primary structure comprises 237 residues: Phosphoribosylaminoimidazole-succinocarboxamide synthase (237 aa).

It belongs to the SAICAR synthetase family.

The catalysed reaction is 5-amino-1-(5-phospho-D-ribosyl)imidazole-4-carboxylate + L-aspartate + ATP = (2S)-2-[5-amino-1-(5-phospho-beta-D-ribosyl)imidazole-4-carboxamido]succinate + ADP + phosphate + 2 H(+). It functions in the pathway purine metabolism; IMP biosynthesis via de novo pathway; 5-amino-1-(5-phospho-D-ribosyl)imidazole-4-carboxamide from 5-amino-1-(5-phospho-D-ribosyl)imidazole-4-carboxylate: step 1/2. This Halalkalibacterium halodurans (strain ATCC BAA-125 / DSM 18197 / FERM 7344 / JCM 9153 / C-125) (Bacillus halodurans) protein is Phosphoribosylaminoimidazole-succinocarboxamide synthase.